Consider the following 858-residue polypeptide: Elongation factor 2 (858 aa).

One can recognise a tr-type G domain in the interval 17-362; sequence ANIRNMSVIA…MITIHLPSPV (346 aa). Position 26-33 (26-33) interacts with GTP; sequence AHVDHGKS. Threonine 54 carries the post-translational modification Phosphothreonine. Threonine 57 is subject to Phosphothreonine; by EEF2K. Residue threonine 59 is modified to Phosphothreonine. Lysine 152 is subject to N6-succinyllysine. GTP contacts are provided by residues 158–161 and 216–218; these read NKMD and SGL. Lysine 235 bears the N6-acetyllysine mark. The residue at position 239 (lysine 239) is an N6-acetyllysine; alternate. Lysine 239 participates in a covalent cross-link: Glycyl lysine isopeptide (Lys-Gly) (interchain with G-Cter in SUMO1); alternate. Residue tyrosine 265 is modified to Phosphotyrosine; by CSK. Position 272 is an N6-acetyllysine; alternate (lysine 272). Residue lysine 272 is modified to N6-succinyllysine; alternate. Lysine 275 is subject to N6-acetyllysine. A Glycyl lysine isopeptide (Lys-Gly) (interchain with G-Cter in SUMO) cross-link involves residue lysine 322. The residue at position 325 (serine 325) is a Phosphoserine. Tyrosine 373 bears the Phosphotyrosine; by CSK mark. The residue at position 435 (threonine 435) is a Phosphothreonine. N6-acetyllysine occurs at positions 439 and 445. At serine 502 the chain carries Phosphoserine. Lysine 525 bears the N6,N6,N6-trimethyllysine; by EEF2KMT mark. A Glycyl lysine isopeptide (Lys-Gly) (interchain with G-Cter in SUMO) cross-link involves residue lysine 529. Lysine 572 is subject to N6-succinyllysine. Residue serine 595 is modified to Phosphoserine; by CDK2. Position 619 is an N6-acetyllysine (lysine 619). Position 715 is a diphthamide (histidine 715).

Belongs to the TRAFAC class translation factor GTPase superfamily. Classic translation factor GTPase family. EF-G/EF-2 subfamily. As to quaternary structure, binds to 80S ribosomes. Actively translating ribosomes show mutually exclusive binding of eIF5a (EIF5A or EIF5A2) and EEF2/eEF2. Interacts with SERBP1; interaction sequesters EEF2/eEF2 at the A-site of the ribosome, thereby blocking the interaction sites of the mRNA-tRNA complex, promoting ribosome stabilization and hibernation. Interacts with HABP4; interaction takes place at the A-site of hibernating ribosomes and promotes ribosome stabilization. Component of the mRNA surveillance SURF complex, at least composed of ERF1, ERF3 (ERF3A or ERF3B), EEF2, UPF1/RENT1, SMG1, SMG8 and SMG9. Interacts with RBPMS2. Post-translationally, diphthamide is 2-[3-carboxyamido-3-(trimethyl-ammonio)propyl]histidine. Phosphorylation by EF-2 kinase completely inactivates EF-2; it requires prior phosphorylation by CDK2 at Ser-595 during mitotic prometaphase. Phosphorylation by CSK promotes SUMOylation, proteolytic cleavage, and nuclear translocation if the C-terminal fragment. In terms of processing, proteolytically processed at two sites following phosphorylation by CSK. Post-translationally, SUMOylated following phosphorylation by CSK, promotes proteolytic cleavage. ISGylated.

The protein resides in the cytoplasm. It is found in the nucleus. It catalyses the reaction GTP + H2O = GDP + phosphate + H(+). Its function is as follows. Catalyzes the GTP-dependent ribosomal translocation step during translation elongation. During this step, the ribosome changes from the pre-translocational (PRE) to the post-translocational (POST) state as the newly formed A-site-bound peptidyl-tRNA and P-site-bound deacylated tRNA move to the P and E sites, respectively. Catalyzes the coordinated movement of the two tRNA molecules, the mRNA and conformational changes in the ribosome. In Rattus norvegicus (Rat), this protein is Elongation factor 2 (Eef2).